The chain runs to 303 residues: Acetylglutamate kinase (303 aa).

Residues 73-74, arginine 95, and asparagine 194 each bind substrate; that span reads GG.

This sequence belongs to the acetylglutamate kinase family. ArgB subfamily.

It localises to the cytoplasm. The enzyme catalyses N-acetyl-L-glutamate + ATP = N-acetyl-L-glutamyl 5-phosphate + ADP. It functions in the pathway amino-acid biosynthesis; L-arginine biosynthesis; N(2)-acetyl-L-ornithine from L-glutamate: step 2/4. Catalyzes the ATP-dependent phosphorylation of N-acetyl-L-glutamate. The sequence is that of Acetylglutamate kinase from Saccharopolyspora erythraea (strain ATCC 11635 / DSM 40517 / JCM 4748 / NBRC 13426 / NCIMB 8594 / NRRL 2338).